The primary structure comprises 305 residues: Ribosomal RNA small subunit methyltransferase H (305 aa).

S-adenosyl-L-methionine contacts are provided by residues 33–35, aspartate 51, phenylalanine 78, aspartate 96, and glutamine 103; that span reads GGY.

This sequence belongs to the methyltransferase superfamily. RsmH family.

The protein localises to the cytoplasm. The enzyme catalyses cytidine(1402) in 16S rRNA + S-adenosyl-L-methionine = N(4)-methylcytidine(1402) in 16S rRNA + S-adenosyl-L-homocysteine + H(+). Specifically methylates the N4 position of cytidine in position 1402 (C1402) of 16S rRNA. This is Ribosomal RNA small subunit methyltransferase H from Rickettsia bellii (strain RML369-C).